The sequence spans 490 residues: Beta-N-acetyl-D-glucosaminide beta-1,4-N-acetylglucosaminyl-transferase (490 aa).

The Cytoplasmic segment spans residues 1-30 (MYLVVCWGRVTGNMISTRHCFSRCKSRSVR). A helical; Signal-anchor for type II membrane protein transmembrane segment spans residues 31 to 50 (VIKATAMLFVAAMLFLALHM). Residues Asn-51, Asn-82, Asn-441, Asn-459, and Asn-485 are each glycosylated (N-linked (GlcNAc...) asparagine). Residues 51–490 (NFSHEASQQN…YLTGNFTIIS (440 aa)) are Lumenal-facing.

Belongs to the glycosyltransferase 7 family.

It is found in the golgi apparatus membrane. It catalyses the reaction an N-acetyl-beta-D-glucosaminyl derivative + UDP-N-acetyl-alpha-D-glucosamine = an N-acetyl-beta-D-glucosaminyl-(1-&gt;4)-N-acetyl-beta-D-glucosaminyl derivative + UDP + H(+). It functions in the pathway protein modification; protein glycosylation. This chain is Beta-N-acetyl-D-glucosaminide beta-1,4-N-acetylglucosaminyl-transferase (GNT), found in Lymnaea stagnalis (Great pond snail).